We begin with the raw amino-acid sequence, 456 residues long: CBL-interacting protein kinase 9 (456 aa).

In terms of domain architecture, Protein kinase spans 27–282 (YELGKTIGEG…IAQILEDDWF (256 aa)). Residues 33–41 (IGEGSFAKV) and Lys-56 each bind ATP. Asp-150 (proton acceptor) is an active-site residue. An activation loop region spans residues 168–197 (DFGLSAFAPQTKEDGLLHTACGTPNYVAPE). An NAF domain is found at 318–343 (REKPESMNAFALISRSQGFNLGNLFE). The segment at 351–380 (KRETSFTSQCTPQEIMSKIEEACGPLGFNV) is PPI.

Belongs to the protein kinase superfamily. CAMK Ser/Thr protein kinase family. SNF1 subfamily. Mn(2+) is required as a cofactor.

The catalysed reaction is L-seryl-[protein] + ATP = O-phospho-L-seryl-[protein] + ADP + H(+). The enzyme catalyses L-threonyl-[protein] + ATP = O-phospho-L-threonyl-[protein] + ADP + H(+). Functionally, CIPK serine-threonine protein kinases interact with CBL proteins. Binding of a CBL protein to the regulatory NAF domain of CIPK protein lead to the activation of the kinase in a calcium-dependent manner. The protein is CBL-interacting protein kinase 9 (CIPK9) of Oryza sativa subsp. japonica (Rice).